The sequence spans 536 residues: G-protein coupled receptor Mth2 (536 aa).

Residues 1–210 (MAERDHYHTI…DDNSTVKIIN (210 aa)) lie on the Extracellular side of the membrane. 5 cysteine pairs are disulfide-bonded: cysteine 17-cysteine 71, cysteine 73-cysteine 78, cysteine 82-cysteine 177, cysteine 83-cysteine 96, and cysteine 138-cysteine 197. 2 N-linked (GlcNAc...) asparagine glycosylation sites follow: asparagine 24 and asparagine 33. 6 N-linked (GlcNAc...) asparagine glycosylation sites follow: asparagine 103, asparagine 113, asparagine 118, asparagine 159, asparagine 184, and asparagine 203. The helical transmembrane segment at 211-231 (AYAMMFSIPFMMLTIAVYLLI) threads the bilayer. Residues 232–241 (PELRNQHGKS) lie on the Cytoplasmic side of the membrane. Residues 242–262 (LVCYLVGLTVGYTSLCYVQLY) form a helical membrane-spanning segment. The Extracellular portion of the chain corresponds to 263–273 (QVDATGDACKV). A helical membrane pass occupies residues 274-294 (FGYTAYFFFMGAYMWLSVISF). The Cytoplasmic portion of the chain corresponds to 295–314 (DLWHNFRGTRGINRFQEKKR). Residues 315 to 335 (FLFYSLYSWGIAVVFLAFTYI) form a helical membrane-spanning segment. The Extracellular segment spans residues 336–365 (AQELTNLPAYLKPGIGDGVYCWLDMSNWAA). A helical transmembrane segment spans residues 366-386 (MIYFYGPILVIVVANTIMFIM). Residues 387-417 (TAIKIHGVQREMARIIASENSTKNLRTEKDK) lie on the Cytoplasmic side of the membrane. Residues 418-438 (FGLFLRLFLIMGITWLTELIS) traverse the membrane as a helical segment. The Extracellular segment spans residues 439–449 (YFVGSDKGWSK). The helical transmembrane segment at 450–470 (LFYISDLANAMQGFLIFMLFV) threads the bilayer. The Cytoplasmic segment spans residues 471–536 (MKKKVKHLIT…VDPQKTTIFR (66 aa)). Positions 487–506 (RDGSNQRQSQYSTKTTSSSV) are disordered. Residues 492-505 (QRQSQYSTKTTSSS) are compositionally biased toward low complexity.

The protein belongs to the G-protein coupled receptor 2 family. Mth subfamily. Homodimer.

The protein localises to the cell membrane. Its function is as follows. Involved in biological aging and stress response. Essential for adult survival. This Drosophila yakuba (Fruit fly) protein is G-protein coupled receptor Mth2 (mth2).